The following is a 293-amino-acid chain: Triplex capsid protein 2 (293 aa).

Belongs to the herpesviridae TRX2 protein family. Interacts with TRX1 and major capisd protein/MCP.

The protein resides in the virion. Its subcellular location is the host nucleus. Its function is as follows. Structural component of the T=16 icosahedral capsid. The capsid is composed of pentamers and hexamers of major capsid protein/MCP, which are linked together by heterotrimers called triplexes. These triplexes are formed by a single molecule of triplex protein 1/TRX1 and two copies of triplex protein 2/TRX2. Additionally, TRX1 is required for efficient transport of TRX2 to the nucleus, which is the site of capsid assembly. This is Triplex capsid protein 2 from Homo sapiens (Human).